Here is a 749-residue protein sequence, read N- to C-terminus: cGMP-dependent protein kinase egl-4 (749 aa).

Residues 30–96 (EAHELQKLIP…LEQKAQSAAS (67 aa)) are a coiled coil. The interval 87–111 (LEQKAQSAASPGQPPSPSPRTDQLG) is disordered. 3',5'-cyclic GMP is bound by residues 234–237 (GELA), 244–245 (RT), R349, 358–361 (GERA), 368–369 (RT), and Y403. A Protein kinase domain is found at 438-698 (VKRLATLGVG…VNDIRKHRWF (261 aa)). ATP-binding positions include 444 to 452 (LGVGGFGRV) and K468. Residues 461-473 (KSKTYALKALKKK) carry the Nuclear localization signal motif. Catalysis depends on D562, which acts as the Proton acceptor. Residues 699–749 (MGFDWEGLRTKTLKPPILPKVNNPADVTNFDNYPPDNDVPPDEFSGWDEGF) enclose the AGC-kinase C-terminal domain. The tract at residues 723–749 (ADVTNFDNYPPDNDVPPDEFSGWDEGF) is disordered.

The protein belongs to the protein kinase superfamily. AGC Ser/Thr protein kinase family. cGMP subfamily. Requires Mg(2+) as cofactor. Post-translationally, autophosphorylated.

The protein resides in the cytoplasm. The protein localises to the nucleus. The enzyme catalyses L-seryl-[protein] + ATP = O-phospho-L-seryl-[protein] + ADP + H(+). The catalysed reaction is L-threonyl-[protein] + ATP = O-phospho-L-threonyl-[protein] + ADP + H(+). Its activity is regulated as follows. Binding of cGMP results in enzyme activation. In terms of biological role, promotes chemoreceptor gene expression in response to increased cGMP levels by antagonizing the gene repression functions of the class II HDAC hda-4 and the mef-2 transcription factor. Regulates gene expression via recruitment of a histone deacetylase complex containing hda-2, saeg-1 and saeg-2. Represses body size and lifespan through the dbl-1 and insulin pathways, respectively. May also signal through daf-3 and/or daf-5. Role in egg-laying, dauer formation and motility. Regulates behavioral responses to various chemosensory stimuli in sensory neurons. Required for the initiation of long term adaptation to prolonged odor exposure which results in a decrease in odor seeking behavior. May regulate this process by phosphorylating tax-2, a subunit of cyclic nucleotide-gated channel tax-2/tax-4. In ASH sensory neurons, negatively regulates avoidance behavior to some bitter tastants, such as quinine, probably by phosphorylating rgs-2 and rgs-3 which are 2 regulator of G-protein signaling proteins. In AWB sensory neurons, involved in avoidance behavior to some repellent odors. In ASE left (ASEL) sensory neuron, involved in the sensing of environmental alkalinity downstream of receptor-type guanylate cyclase gcy-14. In sensory neurons, involved in the signaling pathway downstream of insulin, TGF-beta and receptor-type guanylate cyclase responsible for inducing quiescence after food intake. Might play a role in aversive olfactory learning in AWC neurons when an odor is associated with food deprivation, depending on the ins-1/age-1 signal from the AIA to the AWC neurons. Probably by regulating neuronal transmission downstream of lin-3 and receptor lin-23 and phospholipase plc-3 in ALA neurons, involved in the decrease in locomotion during the quiescent state that precedes each larval molt. The sequence is that of cGMP-dependent protein kinase egl-4 from Caenorhabditis briggsae.